We begin with the raw amino-acid sequence, 556 residues long: Secreted RxLR effector protein 114 (556 aa).

An N-terminal signal peptide occupies residues 1–19 (MCGAHFVAIALLVAAGCQT). 3 disordered regions span residues 43 to 76 (LQSRNLRESRDSKDDLLSAGDEERTPPFPSGVLK), 108 to 138 (NQLKSNKPQRIAPASRSVAGQVLHSSPDSDK), and 389 to 408 (NDKSAHTTAENHQSVPEDWN). Positions 46–66 (RNLRESRDSKDDLLSAGDEER) match the RxLR-dEER motif. The span at 47 to 67 (NLRESRDSKDDLLSAGDEERT) shows a compositional bias: basic and acidic residues.

Belongs to the RxLR effector family.

Its subcellular location is the secreted. The protein localises to the host cell. Its function is as follows. Secreted effector that partially suppresses the host cell death induced by cell death-inducing proteins. This is Secreted RxLR effector protein 114 from Plasmopara viticola (Downy mildew of grapevine).